A 141-amino-acid polypeptide reads, in one-letter code: Galactose-6-phosphate isomerase subunit LacA (141 aa).

The protein belongs to the LacAB/RpiB family. As to quaternary structure, heteromultimeric protein consisting of LacA and LacB.

It catalyses the reaction aldehydo-D-galactose 6-phosphate = keto-D-tagatose 6-phosphate. The protein operates within carbohydrate metabolism; D-galactose 6-phosphate degradation; D-tagatose 6-phosphate from D-galactose 6-phosphate: step 1/1. The sequence is that of Galactose-6-phosphate isomerase subunit LacA from Streptococcus pneumoniae (strain P1031).